We begin with the raw amino-acid sequence, 458 residues long: ATP synthase subunit beta (458 aa).

148–155 (GGAGVGKT) contacts ATP.

The protein belongs to the ATPase alpha/beta chains family. In terms of assembly, F-type ATPases have 2 components, CF(1) - the catalytic core - and CF(0) - the membrane proton channel. CF(1) has five subunits: alpha(3), beta(3), gamma(1), delta(1), epsilon(1). CF(0) has three main subunits: a(1), b(2) and c(9-12). The alpha and beta chains form an alternating ring which encloses part of the gamma chain. CF(1) is attached to CF(0) by a central stalk formed by the gamma and epsilon chains, while a peripheral stalk is formed by the delta and b chains.

The protein localises to the cell inner membrane. It carries out the reaction ATP + H2O + 4 H(+)(in) = ADP + phosphate + 5 H(+)(out). Functionally, produces ATP from ADP in the presence of a proton gradient across the membrane. The catalytic sites are hosted primarily by the beta subunits. The sequence is that of ATP synthase subunit beta from Francisella tularensis subsp. holarctica (strain FTNF002-00 / FTA).